Consider the following 279-residue polypeptide: Virginiamycin B lyase (279 aa).

A substrate-binding site is contributed by His215. Residue Glu253 participates in Mg(2+) binding. His255 serves as the catalytic Proton acceptor. Residue Glu270 participates in Mg(2+) binding.

It belongs to the Vgb family. As to quaternary structure, monomer. Requires Mg(2+) as cofactor.

Its function is as follows. Inactivates the type B streptogramin antibiotics by linearizing the lactone ring at the ester linkage, generating a free phenylglycine carboxylate and converting the threonyl moiety into 2-amino-butenoic acid. This is Virginiamycin B lyase from Nocardia farcinica (strain IFM 10152).